A 297-amino-acid chain; its full sequence is ER membrane protein complex subunit 2-B (297 aa).

TPR repeat units lie at residues 87–120, 155–188, and 192–225; these read HRVKRLTGLRFEAMERYDDALQIYDRILQDDPTN, QEAWHELAELYINELDYAKAAFCLEELILTNPHN, and YQQFAEVKYTQGGLENLELSRKYFSQALKLNNHS.

The protein belongs to the EMC2 family. In terms of assembly, component of the ER membrane protein complex (EMC).

It is found in the endoplasmic reticulum membrane. Part of the endoplasmic reticulum membrane protein complex (EMC) that enables the energy-independent insertion into endoplasmic reticulum membranes of newly synthesized membrane proteins. Preferentially accommodates proteins with transmembrane domains that are weakly hydrophobic or contain destabilizing features such as charged and aromatic residues. Involved in the cotranslational insertion of multi-pass membrane proteins in which stop-transfer membrane-anchor sequences become ER membrane spanning helices. It is also required for the post-translational insertion of tail-anchored/TA proteins in endoplasmic reticulum membranes. By mediating the proper cotranslational insertion of N-terminal transmembrane domains in an N-exo topology, with translocated N-terminus in the lumen of the ER, controls the topology of multi-pass membrane proteins. By regulating the insertion of various proteins in membranes, it is indirectly involved in many cellular processes. The chain is ER membrane protein complex subunit 2-B (emc2-b) from Xenopus laevis (African clawed frog).